Reading from the N-terminus, the 95-residue chain is Lipolysis-activating peptide 1-beta chain (95 aa).

An N-terminal signal peptide occupies residues 1 to 22 (MISVQVIFIAFISIIAFSMVCG). The LCN-type CS-alpha/beta domain occupies 23–91 (GNVFPNRELG…FLNALEKQCP (69 aa)). 3 cysteine pairs are disulfide-bonded: Cys-37–Cys-60, Cys-45–Cys-70, and Cys-49–Cys-72.

Homodimer; disulfide-linked or monomer (edited version) or heterodimer of an alpha chain (AC P84810) and this beta chain (non-edited version). In terms of tissue distribution, expressed by the venom gland.

Its subcellular location is the secreted. In terms of biological role, the homodimer inhibits HMG-CoA reductase (HMGCR) (32% of inhibition produced by 0.6 uM), a glycoprotein involved in the control of cholesterol biosynthesis. The inhibitory effects of bumarsin are seen at much lower concentrations (0.6 uM) than that for statins such as atorvastatin (5 mM) and simvastatin (10 uM). In addition to inhibition of HMG-CoA reductase, this protein lowers cholesterol levels by inducing steroid hormone synthesis via StAR, and by increasing reverse cholesterol transport mediated by the induction of ABCA1 and APOA1. The heterodimer non-edited LVP1 induces lipolysis in rat adipocytes. Induction of lipolysis by LVP1 appears to be mediated through the beta-2 adrenergic receptor pathway (ADRB2). Intracerebroventricular injection is not toxic to mice. Functionally, the monomer edited version, similar to alpha-toxins, may modulate voltage-gated sodium channels (Nav) and may block voltage-gated potassium channels (Kv). This Buthus occitanus tunetanus (Common European scorpion) protein is Lipolysis-activating peptide 1-beta chain.